The chain runs to 67 residues: Large ribosomal subunit protein bL31 (67 aa).

Zn(2+) is bound by residues Cys-16, Cys-18, Cys-38, and Cys-41.

This sequence belongs to the bacterial ribosomal protein bL31 family. Type A subfamily. In terms of assembly, part of the 50S ribosomal subunit. Requires Zn(2+) as cofactor.

Binds the 23S rRNA. The protein is Large ribosomal subunit protein bL31 of Thioalkalivibrio sulfidiphilus (strain HL-EbGR7).